Reading from the N-terminus, the 126-residue chain is Histone H2B type 1-D (126 aa).

Positions 1–12 (MPEPTKSAPAPK) are enriched in low complexity. Residues 1-36 (MPEPTKSAPAPKKGSKKAVTKAQKKDGKKRKRSRKE) form a disordered region. N-acetylproline is present on Pro-2. Glu-3 is modified (ADP-ribosyl glutamic acid). Position 6 is an N6-(2-hydroxyisobutyryl)lysine; alternate (Lys-6). Lys-6 is modified (N6-(beta-hydroxybutyryl)lysine; alternate). Lys-6 is modified (N6-acetyllysine; alternate). Residue Lys-6 is modified to N6-butyryllysine; alternate. At Lys-6 the chain carries N6-crotonyllysine; alternate. At Lys-6 the chain carries N6-lactoyllysine; alternate. Lys-6 is covalently cross-linked (Glycyl lysine isopeptide (Lys-Gly) (interchain with G-Cter in SUMO2); alternate). Position 7 is an ADP-ribosylserine (Ser-7). Lys-12 carries the post-translational modification N6-(beta-hydroxybutyryl)lysine; alternate. 2 positions are modified to N6-acetyllysine; alternate: Lys-12 and Lys-13. An N6-crotonyllysine; alternate mark is found at Lys-12 and Lys-13. Residue Lys-12 is modified to N6-lactoyllysine; alternate. Lys-13 is subject to N6-(2-hydroxyisobutyryl)lysine; alternate. Phosphoserine; by STK4/MST1 is present on Ser-15. N6-acetyllysine; alternate occurs at positions 16, 17, 21, and 24. Residues Lys-16, Lys-17, Lys-21, and Lys-24 each carry the N6-crotonyllysine; alternate modification. Residues Lys-16, Lys-17, Lys-21, and Lys-24 each carry the N6-lactoyllysine; alternate modification. N6-(beta-hydroxybutyryl)lysine; alternate is present on residues Lys-17 and Lys-21. Lys-17 bears the N6-glutaryllysine; alternate mark. N6-(2-hydroxyisobutyryl)lysine; alternate occurs at positions 21 and 24. Lys-21 carries the post-translational modification N6-butyryllysine; alternate. Lys-21 is covalently cross-linked (Glycyl lysine isopeptide (Lys-Gly) (interchain with G-Cter in SUMO2); alternate). Lys-25 is subject to N6-(2-hydroxyisobutyryl)lysine. An N6-(2-hydroxyisobutyryl)lysine; alternate modification is found at Lys-35. At Lys-35 the chain carries N6-(beta-hydroxybutyryl)lysine; alternate. Lys-35 is modified (N6-crotonyllysine; alternate). Lys-35 carries the N6-glutaryllysine; alternate modification. Residue Lys-35 is modified to N6-succinyllysine; alternate. Lys-35 is covalently cross-linked (Glycyl lysine isopeptide (Lys-Gly) (interchain with G-Cter in ubiquitin); alternate). A PolyADP-ribosyl glutamic acid modification is found at Glu-36. Position 37 is a phosphoserine; by AMPK (Ser-37). N6-(2-hydroxyisobutyryl)lysine; alternate occurs at positions 44, 47, and 58. Lys-44 carries the post-translational modification N6-lactoyllysine; alternate. Lys-44 and Lys-47 each carry N6-glutaryllysine; alternate. An N6-methyllysine; alternate modification is found at Lys-47. Lys-58 carries the N6,N6-dimethyllysine; alternate modification. Arg-80 carries the dimethylated arginine modification. Lys-86 bears the N6-(2-hydroxyisobutyryl)lysine; alternate mark. Position 86 is an N6-(beta-hydroxybutyryl)lysine; alternate (Lys-86). Lys-86 carries the post-translational modification N6-acetyllysine; alternate. N6-lactoyllysine; alternate is present on Lys-86. Lys-86 carries the N6,N6,N6-trimethyllysine; alternate modification. 2 positions are modified to omega-N-methylarginine: Arg-87 and Arg-93. At Lys-109 the chain carries N6-(2-hydroxyisobutyryl)lysine; alternate. N6-lactoyllysine; alternate is present on Lys-109. An N6-glutaryllysine; alternate modification is found at Lys-109. Lys-109 is modified (N6-methyllysine; alternate). An O-linked (GlcNAc) serine glycan is attached at Ser-113. Thr-116 is subject to Phosphothreonine. Residues Lys-117 and Lys-121 each carry the N6-(2-hydroxyisobutyryl)lysine; alternate modification. N6-(beta-hydroxybutyryl)lysine; alternate is present on residues Lys-117 and Lys-121. 2 positions are modified to N6-lactoyllysine; alternate: Lys-117 and Lys-121. An N6-glutaryllysine; alternate mark is found at Lys-117 and Lys-121. Lys-117 and Lys-121 each carry N6-succinyllysine; alternate. Lys-117 is subject to N6-malonyllysine; alternate. An N6-methylated lysine; alternate modification is found at Lys-117. Lys-121 participates in a covalent cross-link: Glycyl lysine isopeptide (Lys-Gly) (interchain with G-Cter in ubiquitin); alternate.

It belongs to the histone H2B family. The nucleosome is a histone octamer containing two molecules each of H2A, H2B, H3 and H4 assembled in one H3-H4 heterotetramer and two H2A-H2B heterodimers. The octamer wraps approximately 147 bp of DNA. Post-translationally, monoubiquitination at Lys-35 (H2BK34Ub) by the MSL1/MSL2 dimer is required for histone H3 'Lys-4' (H3K4me) and 'Lys-79' (H3K79me) methylation and transcription activation at specific gene loci, such as HOXA9 and MEIS1 loci. Similarly, monoubiquitination at Lys-121 (H2BK120Ub) by the RNF20/40 complex gives a specific tag for epigenetic transcriptional activation and is also prerequisite for histone H3 'Lys-4' and 'Lys-79' methylation. It also functions cooperatively with the FACT dimer to stimulate elongation by RNA polymerase II. H2BK120Ub also acts as a regulator of mRNA splicing: deubiquitination by USP49 is required for efficient cotranscriptional splicing of a large set of exons. In terms of processing, phosphorylation at Ser-37 (H2BS36ph) by AMPK in response to stress promotes transcription. Phosphorylated on Ser-15 (H2BS14ph) by STK4/MST1 during apoptosis; which facilitates apoptotic chromatin condensation. Also phosphorylated on Ser-15 in response to DNA double strand breaks (DSBs), and in correlation with somatic hypermutation and immunoglobulin class-switch recombination. GlcNAcylation at Ser-113 promotes monoubiquitination of Lys-121. It fluctuates in response to extracellular glucose, and associates with transcribed genes. Post-translationally, ADP-ribosylated by PARP1 or PARP2 on Ser-7 (H2BS6ADPr) in response to DNA damage. H2BS6ADPr promotes recruitment of CHD1L. Mono-ADP-ribosylated on Glu-3 (H2BE2ADPr) by PARP3 in response to single-strand breaks. Poly ADP-ribosylation on Glu-36 (H2BE35ADPr) by PARP1 regulates adipogenesis: it inhibits phosphorylation at Ser-37 (H2BS36ph), thereby blocking expression of pro-adipogenetic genes. In terms of processing, crotonylation (Kcr) is specifically present in male germ cells and marks testis-specific genes in post-meiotic cells, including X-linked genes that escape sex chromosome inactivation in haploid cells. Crotonylation marks active promoters and enhancers and confers resistance to transcriptional repressors. It is also associated with post-meiotically activated genes on autosomes. Lactylated in macrophages by EP300/P300 by using lactoyl-CoA directly derived from endogenous or exogenous lactate, leading to stimulates gene transcription.

Its subcellular location is the nucleus. It is found in the chromosome. Functionally, core component of nucleosome. Nucleosomes wrap and compact DNA into chromatin, limiting DNA accessibility to the cellular machineries which require DNA as a template. Histones thereby play a central role in transcription regulation, DNA repair, DNA replication and chromosomal stability. DNA accessibility is regulated via a complex set of post-translational modifications of histones, also called histone code, and nucleosome remodeling. The sequence is that of Histone H2B type 1-D from Homo sapiens (Human).